The following is a 605-amino-acid chain: Formin-binding protein 1-like (605 aa).

Residues 1 to 263 (MSWGTELWDQ…AAKSVDERRD (263 aa)) enclose the F-BAR domain. Residues 66 to 258 (FTSCIAFFNI…EGMILAAKSV (193 aa)) are a coiled coil. An interaction with CDC42 region spans residues 245–535 (SKCLEGMILA…EFDDEFEDDD (291 aa)). A Phosphoserine modification is found at S295. Residues 392–484 (LEDFSHLPPE…VEGKTGIRGD (93 aa)) are a coiled coil. Positions 397–474 (HLPPEQRRKK…IHKNEAWLSE (78 aa)) constitute an REM-1 domain. The disordered stretch occupies residues 482–538 (RGDRRHSSDINHLVTQGRESPEGSYTDDANQEVRGPPQQHGHHSEFDDEFEDDDPLP). A phosphoserine mark is found at S488, S501, and S505. The interval 522 to 605 (GHHSEFDDEF…VTLEKSSKGS (84 aa)) is interaction with DNM1. The segment covering 527–536 (FDDEFEDDDP) has biased composition (acidic residues). Residues 538–599 (PAIGHCKAIY…PTTYIDVTLE (62 aa)) form the SH3 domain. Residues 541–597 (GHCKAIYPFDGHNEGTLAMKEGEVLYIIEEDKGDGWTRARRQNGEEGYVPTTYIDVT) form an interaction with DNM2 and WASL region. Residues 541–605 (GHCKAIYPFD…VTLEKSSKGS (65 aa)) form an interaction with DAAM1, DIAPH1 and DIAPH2 region.

This sequence belongs to the FNBP1 family. In terms of assembly, homodimerizes, the dimers can polymerize end-to-end to form filamentous structures. Interacts with GTP-bound CDC42. Interacts with DAAM1, DIAPH1, DIAPH2, DNM1, DNM2 and WASL/N-WASP. Interacts with ATG3. Interacts (via SH3 domain) with ABI1, WASF2, CDC42 and WIPF1.

Its subcellular location is the cytoplasm. It localises to the cytoskeleton. The protein resides in the cell cortex. It is found in the cytoplasmic vesicle. The protein localises to the cell membrane. Functionally, required to coordinate membrane tubulation with reorganization of the actin cytoskeleton during endocytosis. May bind to lipids such as phosphatidylinositol 4,5-bisphosphate and phosphatidylserine and promote membrane invagination and the formation of tubules. Also promotes CDC42-induced actin polymerization by activating the WASL-WASPIP complex, the predominant form of WASL/N-WASP in cells. Actin polymerization may promote the fission of membrane tubules to form endocytic vesicles. Essential for autophagy of intracellular bacterial pathogens. The sequence is that of Formin-binding protein 1-like (Fnbp1l) from Mus musculus (Mouse).